Here is a 468-residue protein sequence, read N- to C-terminus: Uronate isomerase (468 aa).

It belongs to the metallo-dependent hydrolases superfamily. Uronate isomerase family.

The catalysed reaction is D-glucuronate = D-fructuronate. The enzyme catalyses aldehydo-D-galacturonate = keto-D-tagaturonate. It functions in the pathway carbohydrate metabolism; pentose and glucuronate interconversion. The chain is Uronate isomerase from Phocaeicola vulgatus (strain ATCC 8482 / DSM 1447 / JCM 5826 / CCUG 4940 / NBRC 14291 / NCTC 11154) (Bacteroides vulgatus).